A 213-amino-acid chain; its full sequence is Cytochrome c biogenesis ATP-binding export protein CcmA (213 aa).

The 209-residue stretch at 3–211 (LTAENLGVRR…QMTGFAGVET (209 aa)) folds into the ABC transporter domain. 35-42 (GRNGSGKS) is an ATP binding site.

This sequence belongs to the ABC transporter superfamily. CcmA exporter (TC 3.A.1.107) family. As to quaternary structure, the complex is composed of two ATP-binding proteins (CcmA) and two transmembrane proteins (CcmB).

The protein resides in the cell inner membrane. The catalysed reaction is heme b(in) + ATP + H2O = heme b(out) + ADP + phosphate + H(+). Part of the ABC transporter complex CcmAB involved in the biogenesis of c-type cytochromes; once thought to export heme, this seems not to be the case, but its exact role is uncertain. Responsible for energy coupling to the transport system. This is Cytochrome c biogenesis ATP-binding export protein CcmA from Agrobacterium fabrum (strain C58 / ATCC 33970) (Agrobacterium tumefaciens (strain C58)).